Consider the following 353-residue polypeptide: Photosystem II D2 protein (353 aa).

N-acetylthreonine is present on T2. The residue at position 2 (T2) is a Phosphothreonine. Residues 41-61 (CAYFALGGWFTGTTFVTSWYT) form a helical membrane-spanning segment. Residue H118 coordinates chlorophyll a. The helical transmembrane segment at 125–141 (GFMLRQFELARSVQLRP) threads the bilayer. Positions 130 and 143 each coordinate pheophytin a. The chain crosses the membrane as a helical span at residues 153 to 166 (VFVSVFLIYPLGQS). H198 contacts chlorophyll a. Residues 208 to 228 (AALLCAIHGATVENTLFEDGD) traverse the membrane as a helical segment. The a plastoquinone site is built by H215 and F262. Fe cation is bound at residue H215. H269 lines the Fe cation pocket. Residues 279 to 295 (GLWMSAIGVVGLALNLR) traverse the membrane as a helical segment.

The protein belongs to the reaction center PufL/M/PsbA/D family. In terms of assembly, PSII is composed of 1 copy each of membrane proteins PsbA, PsbB, PsbC, PsbD, PsbE, PsbF, PsbH, PsbI, PsbJ, PsbK, PsbL, PsbM, PsbT, PsbX, PsbY, PsbZ, Psb30/Ycf12, at least 3 peripheral proteins of the oxygen-evolving complex and a large number of cofactors. It forms dimeric complexes. The cofactor is The D1/D2 heterodimer binds P680, chlorophylls that are the primary electron donor of PSII, and subsequent electron acceptors. It shares a non-heme iron and each subunit binds pheophytin, quinone, additional chlorophylls, carotenoids and lipids. There is also a Cl(-1) ion associated with D1 and D2, which is required for oxygen evolution. The PSII complex binds additional chlorophylls, carotenoids and specific lipids..

Its subcellular location is the plastid. The protein localises to the chloroplast thylakoid membrane. It catalyses the reaction 2 a plastoquinone + 4 hnu + 2 H2O = 2 a plastoquinol + O2. Its function is as follows. Photosystem II (PSII) is a light-driven water:plastoquinone oxidoreductase that uses light energy to abstract electrons from H(2)O, generating O(2) and a proton gradient subsequently used for ATP formation. It consists of a core antenna complex that captures photons, and an electron transfer chain that converts photonic excitation into a charge separation. The D1/D2 (PsbA/PsbD) reaction center heterodimer binds P680, the primary electron donor of PSII as well as several subsequent electron acceptors. D2 is needed for assembly of a stable PSII complex. The sequence is that of Photosystem II D2 protein from Pinus thunbergii (Japanese black pine).